A 1134-amino-acid chain; its full sequence is Error-prone DNA polymerase (1134 aa).

Residues 1–33 form a disordered region; the sequence is MSYHNPPIPWRELEGRISGRPAPHGHQESHADQ.

This sequence belongs to the DNA polymerase type-C family. DnaE2 subfamily.

It is found in the cytoplasm. It carries out the reaction DNA(n) + a 2'-deoxyribonucleoside 5'-triphosphate = DNA(n+1) + diphosphate. Functionally, DNA polymerase involved in damage-induced mutagenesis and translesion synthesis (TLS). It is not the major replicative DNA polymerase. This Cutibacterium acnes (strain DSM 16379 / KPA171202) (Propionibacterium acnes) protein is Error-prone DNA polymerase.